The primary structure comprises 110 residues: Proline-rich protein 15-like protein A (110 aa).

Disordered regions lie at residues 29 to 51 and 65 to 110; these read IAGD…TDSQ and TKGR…KSGK. A compositionally biased stretch (basic residues) spans 65 to 85; it reads TKGRHVKVSHSGRFKEKKRIR. Residues 100-110 are compositionally biased toward polar residues; that stretch reads TTANENNKSGK.

The protein belongs to the PRR15 family.

The protein is Proline-rich protein 15-like protein A (prr15la) of Danio rerio (Zebrafish).